Reading from the N-terminus, the 216-residue chain is Sperm microtubule inner protein 8 (216 aa).

In terms of assembly, microtubule inner protein component of sperm flagellar doublet microtubules.

The protein localises to the cytoplasm. It localises to the cytoskeleton. Its subcellular location is the flagellum axoneme. In terms of biological role, microtubule inner protein (MIP) part of the dynein-decorated doublet microtubules (DMTs) in flagellum axoneme. May serve to reinforce and thus stabilize the microtubule structure in the sperm flagella. The polypeptide is Sperm microtubule inner protein 8 (Spmip8) (Rattus norvegicus (Rat)).